A 313-amino-acid chain; its full sequence is Mitochondrial uncoupling protein 4 (313 aa).

Solcar repeat units lie at residues 4–115 (KSFV…LKNK), 124–215 (LNLS…FKEG), and 224–309 (DGLG…VRKL). Helical transmembrane passes span 6-26 (FVEG…LDLI), 84-104 (AAAL…YSTT), 130-150 (IGAG…ADVA), 189-209 (RGSA…LASY), 230-250 (VVAS…VDVI), and 282-302 (YKGF…LFVT).

The protein belongs to the mitochondrial carrier (TC 2.A.29) family. As to expression, expressed in roots, leaves, stems and flowers.

The protein localises to the mitochondrion inner membrane. PUMPS are mitochondrial transporter proteins that create proton leaks across the inner mitochondrial membrane, thus uncoupling oxidative phosphorylation. This leads to a decrease in the efficiency of oxidative phosphorylation and an increase in heat production. May be involved in protecting plant cells against oxidative stress damage. Recombinant PUMP4, reconstituted into liposomes, transports a wide range of dicarboxylic acids including malate, oxaloacetate and succinate as well as phosphate, sulfate and thiosulfate. However, it is unknown if these transports are of any biological significance in vivo. The chain is Mitochondrial uncoupling protein 4 (PUMP4) from Arabidopsis thaliana (Mouse-ear cress).